The following is a 604-amino-acid chain: UvrABC system protein C (604 aa).

The GIY-YIG domain maps to 12-90 (TAPGVYLMRD…IKQHQPRYNL (79 aa)). A UVR domain is found at 200-235 (KDLVSGFRQRMKEAAEGLHYEEAARWRDLLKAIDTT).

This sequence belongs to the UvrC family. Interacts with UvrB in an incision complex.

It is found in the cytoplasm. Its function is as follows. The UvrABC repair system catalyzes the recognition and processing of DNA lesions. UvrC both incises the 5' and 3' sides of the lesion. The N-terminal half is responsible for the 3' incision and the C-terminal half is responsible for the 5' incision. The sequence is that of UvrABC system protein C from Trichlorobacter lovleyi (strain ATCC BAA-1151 / DSM 17278 / SZ) (Geobacter lovleyi).